We begin with the raw amino-acid sequence, 523 residues long: Light-independent protochlorophyllide reductase subunit B (523 aa).

D36 is a [4Fe-4S] cluster binding site. D290 functions as the Proton donor in the catalytic mechanism. 425–426 lines the substrate pocket; the sequence is GL.

Belongs to the ChlB/BchB/BchZ family. As to quaternary structure, protochlorophyllide reductase is composed of three subunits; ChlL, ChlN and ChlB. Forms a heterotetramer of two ChlB and two ChlN subunits. It depends on [4Fe-4S] cluster as a cofactor.

It catalyses the reaction chlorophyllide a + oxidized 2[4Fe-4S]-[ferredoxin] + 2 ADP + 2 phosphate = protochlorophyllide a + reduced 2[4Fe-4S]-[ferredoxin] + 2 ATP + 2 H2O. It functions in the pathway porphyrin-containing compound metabolism; chlorophyll biosynthesis (light-independent). Component of the dark-operative protochlorophyllide reductase (DPOR) that uses Mg-ATP and reduced ferredoxin to reduce ring D of protochlorophyllide (Pchlide) to form chlorophyllide a (Chlide). This reaction is light-independent. The NB-protein (ChlN-ChlB) is the catalytic component of the complex. In Prochlorococcus marinus (strain MIT 9215), this protein is Light-independent protochlorophyllide reductase subunit B.